A 114-amino-acid chain; its full sequence is uncharacterized protein (114 aa).

Residues 31-72 are a coiled coil; the sequence is EFEKLVSEQMKTMDKLLDLQSELDRCKQIEAELRHLERDARL.

This is an uncharacterized protein from Bacillus subtilis (strain 168).